A 172-amino-acid polypeptide reads, in one-letter code: Photosystem I assembly protein Ycf3 (172 aa).

TPR repeat units follow at residues 35–68 (AFSYYRNGMSAQAEGEYAEALQNYYEAMRLEVDA), 72–105 (SYILYNIGLIHTSNGEHGRALEYYYQALERNPSL), and 120–153 (GEQAIENGQSEISQILFEKAADYWKEAIRLAPTN).

Belongs to the Ycf3 family.

It is found in the plastid. It localises to the chloroplast thylakoid membrane. Its function is as follows. Essential for the assembly of the photosystem I (PSI) complex. May act as a chaperone-like factor to guide the assembly of the PSI subunits. The protein is Photosystem I assembly protein Ycf3 of Chlamydomonas reinhardtii (Chlamydomonas smithii).